The following is a 342-amino-acid chain: MNTNDFDFYLPEELIAQTPLEKRDASKLLVIDHKNKTMTDSHFDHILDELKPGDALVMNNTRVLPARLYGEKPDTHGHIELLLLKNTEGDQWEVLAKPAKRLRVGTKVSFGDGRLIATVTKELEHGGRIVEFSYDGIFLEVLESLGEMPLPPYIHEKLEDRDRYQTVYAKENGSAAAPTAGLHFTKELLEKIETKGVKLVYLTLHVGLGTFRPVSVDNLDEHEMHSEFYQLSKEAADTLNAVKESGGRIVAVGTTSIRTLETIGSKFNGELKADSGWTNIFIKPGYQFKVVDAFSTNFHLPKSTLVMLVSAFAGRDFVLEAYNHAVEERYRFFSFGDAMFVK.

Belongs to the QueA family. In terms of assembly, monomer.

The protein localises to the cytoplasm. The catalysed reaction is 7-aminomethyl-7-carbaguanosine(34) in tRNA + S-adenosyl-L-methionine = epoxyqueuosine(34) in tRNA + adenine + L-methionine + 2 H(+). The protein operates within tRNA modification; tRNA-queuosine biosynthesis. Transfers and isomerizes the ribose moiety from AdoMet to the 7-aminomethyl group of 7-deazaguanine (preQ1-tRNA) to give epoxyqueuosine (oQ-tRNA). This chain is S-adenosylmethionine:tRNA ribosyltransferase-isomerase, found in Streptococcus agalactiae serotype III (strain NEM316).